The sequence spans 610 residues: Zinc metalloproteinase-disintegrin-like BITM06A (610 aa).

Residues 1–20 (MIQVLLVTICLAAFPYQGSS) form the signal peptide. Positions 21–189 (IILESGNVND…KKASQLVVTA (169 aa)) are excised as a propeptide. The Peptidase M12B domain maps to 198–394 (RYVELFIVVD…ENPQCILNEP (197 aa)). The Ca(2+) site is built by Glu-201 and Asp-285. 3 cysteine pairs are disulfide-bonded: Cys-309–Cys-389, Cys-349–Cys-373, and Cys-351–Cys-356. His-334 serves as a coordination point for Zn(2+). Residue Glu-335 is part of the active site. 2 residues coordinate Zn(2+): His-338 and His-344. Asn-372 carries an N-linked (GlcNAc...) asparagine glycan. Residues Cys-389, Asn-392, Val-404, Asn-407, Leu-409, Glu-411, Glu-414, and Asp-417 each contribute to the Ca(2+) site. In terms of domain architecture, Disintegrin spans 402–488 (PPVCGNELLE…ECPADVFHKN (87 aa)). Intrachain disulfides connect Cys-405/Cys-434, Cys-416/Cys-429, Cys-418/Cys-424, Cys-428/Cys-451, Cys-442/Cys-448, Cys-447/Cys-473, Cys-460/Cys-480, Cys-467/Cys-499, Cys-492/Cys-504, Cys-511/Cys-561, Cys-526/Cys-572, Cys-539/Cys-549, Cys-556/Cys-598, and Cys-592/Cys-603. Residues 466-468 (ECD) carry the D/ECD-tripeptide motif. Residues Asp-468, Pro-469, Glu-471, Asp-483, and Val-484 each contribute to the Ca(2+) site.

The protein belongs to the venom metalloproteinase (M12B) family. P-III subfamily. P-IIIa sub-subfamily. As to quaternary structure, monomer. Requires Zn(2+) as cofactor. Expressed by the venom gland.

It localises to the secreted. Its function is as follows. Snake venom metalloproteinase that impairs hemostasis in the envenomed animal. This chain is Zinc metalloproteinase-disintegrin-like BITM06A, found in Bothrops insularis (Golden lancehead).